The primary structure comprises 315 residues: Olfactory receptor 11A1 (315 aa).

At 1–27 (MEIVSTGNETITEFVLLGFYDIPELHF) the chain is on the extracellular side. Asparagine 8 carries N-linked (GlcNAc...) asparagine glycosylation. A helical transmembrane segment spans residues 28 to 48 (LFFIVFTAVYVFIIIGNMLII). At 49-56 (VAVVSSQR) the chain is on the cytoplasmic side. The helical transmembrane segment at 57–77 (LHKPMYIFLANLSFLDILYTS) threads the bilayer. Residues 78 to 100 (AVMPKMLEGFLQEATISVAGCLL) are Extracellular-facing. Cysteine 98 and cysteine 190 are joined by a disulfide. A helical transmembrane segment spans residues 101–121 (QFFIFGSLATAECLLLAVMAY). At 122–140 (DRYLAICYPLHYPLLMGPR) the chain is on the cytoplasmic side. A helical membrane pass occupies residues 141-161 (RYMGLVVTTWLSGFVVDGLVV). Over 162-198 (ALVAQLRFCGPNHIDQFYCDFMLFVGLACSDPRVAQV) the chain is Extracellular. The helical transmembrane segment at 199–218 (TTLILSVFCLTIPFGLILTS) threads the bilayer. Topologically, residues 219-238 (YARIVVAVLRVPAGASRRRA) are cytoplasmic. A helical membrane pass occupies residues 239 to 259 (FSTCSSHLAVVTTFYGTLMIF). Residues 260-272 (YVAPSAVHSQLLS) lie on the Extracellular side of the membrane. A helical membrane pass occupies residues 273–293 (KVFSLLYTVVTPLFNPVIYTM). Over 294–315 (RNKEVHQALRKILCIKQTETLD) the chain is Cytoplasmic.

This sequence belongs to the G-protein coupled receptor 1 family.

The protein localises to the cell membrane. Odorant receptor. The polypeptide is Olfactory receptor 11A1 (OR11A1) (Homo sapiens (Human)).